The primary structure comprises 363 residues: Chorismate synthase (363 aa).

Arg48 serves as a coordination point for NADP(+). FMN contacts are provided by residues 125–127, 238–239, Gly278, 293–297, and Arg319; these read RSS, NA, and KPTAS.

Belongs to the chorismate synthase family. As to quaternary structure, homotetramer. It depends on FMNH2 as a cofactor.

It carries out the reaction 5-O-(1-carboxyvinyl)-3-phosphoshikimate = chorismate + phosphate. The protein operates within metabolic intermediate biosynthesis; chorismate biosynthesis; chorismate from D-erythrose 4-phosphate and phosphoenolpyruvate: step 7/7. Its function is as follows. Catalyzes the anti-1,4-elimination of the C-3 phosphate and the C-6 proR hydrogen from 5-enolpyruvylshikimate-3-phosphate (EPSP) to yield chorismate, which is the branch point compound that serves as the starting substrate for the three terminal pathways of aromatic amino acid biosynthesis. This reaction introduces a second double bond into the aromatic ring system. In Acinetobacter baumannii (strain ACICU), this protein is Chorismate synthase.